We begin with the raw amino-acid sequence, 308 residues long: Probable 5-dehydro-4-deoxyglucarate dehydratase (308 aa).

This sequence belongs to the DapA family.

It catalyses the reaction 5-dehydro-4-deoxy-D-glucarate + H(+) = 2,5-dioxopentanoate + CO2 + H2O. It functions in the pathway carbohydrate acid metabolism; D-glucarate degradation; 2,5-dioxopentanoate from D-glucarate: step 2/2. The chain is Probable 5-dehydro-4-deoxyglucarate dehydratase from Bacillus licheniformis (strain ATCC 14580 / DSM 13 / JCM 2505 / CCUG 7422 / NBRC 12200 / NCIMB 9375 / NCTC 10341 / NRRL NRS-1264 / Gibson 46).